Here is a 325-residue protein sequence, read N- to C-terminus: MLSMLRTMTRLCFLLFFSVATSGCSAAAASSLEMLSREFETCAFSFSSLPRSCKEIKERCHSAGDGLYFLRTKNGVVYQTFCDMTSGGGGWTLVASVHENDMRGKCTVGDRWSSQQGNKADYPEGDGNWANYNTFGSAEAATSDDYKNPGYYDIQAKDLGIWHVPNKSPMQHWRNSALLRYRTNTGFLQRLGHNLFGIYQKYPVKYRSGKCWNDNGPAIPVVYDFGDAKKTASYYSPYGQREFVAGFVQFRVFNNERAANALCAGIKVTGCNTEHHCIGGGGFFPQGKPRQCGDFSAFDWDGYGTHVKSSCSREITEAAVLLFYR.

The N-terminal stretch at 1–26 (MLSMLRTMTRLCFLLFFSVATSGCSA) is a signal peptide. The Fibrinogen C-terminal domain maps to 44 to 267 (FSFSSLPRSC…AANALCAGIK (224 aa)). C53 and C82 form a disulfide bridge. Ca(2+)-binding residues include H98, E99, D101, G104, G109, D110, and D145. Disulfide bonds link C106/C292, C211/C271, and C263/C277. Ca(2+) is bound by residues N272, E274, and D294. 274-275 (EH) lines the a carbohydrate pocket.

As to expression, expressed only in the small intestine.

It is found in the secreted. May play a role in the defense system against pathogens. In Homo sapiens (Human), this protein is Intelectin-2 (ITLN2).